We begin with the raw amino-acid sequence, 38 residues long: Large ribosomal subunit protein bL36 (38 aa).

Belongs to the bacterial ribosomal protein bL36 family.

This Polynucleobacter necessarius subsp. necessarius (strain STIR1) protein is Large ribosomal subunit protein bL36.